Reading from the N-terminus, the 106-residue chain is Large ribosomal subunit protein eL42 (106 aa).

Positions 34–53 (YAQGKRRYDRKQSGYGGQTK) are disordered.

This sequence belongs to the eukaryotic ribosomal protein eL42 family. Component of the large ribosomal subunit.

It is found in the cytoplasm. In terms of biological role, component of the large ribosomal subunit. The ribosome is a large ribonucleoprotein complex responsible for the synthesis of proteins in the cell. The polypeptide is Large ribosomal subunit protein eL42 (Rpl36a) (Canis lupus familiaris (Dog)).